We begin with the raw amino-acid sequence, 90 residues long: Probable Fe(2+)-trafficking protein (90 aa).

This sequence belongs to the Fe(2+)-trafficking protein family.

Functionally, could be a mediator in iron transactions between iron acquisition and iron-requiring processes, such as synthesis and/or repair of Fe-S clusters in biosynthetic enzymes. The sequence is that of Probable Fe(2+)-trafficking protein from Photobacterium profundum (strain SS9).